The primary structure comprises 305 residues: Ornithine carbamoyltransferase (305 aa).

Carbamoyl phosphate-binding positions include 52-55 (STRT), Q79, R103, and 130-133 (HPLQ). Residues N162, D224, and 228 to 229 (SM) each bind L-ornithine. Carbamoyl phosphate is bound by residues 264-265 (CL) and R292.

Belongs to the aspartate/ornithine carbamoyltransferase superfamily. OTCase family.

The protein localises to the cytoplasm. It carries out the reaction carbamoyl phosphate + L-ornithine = L-citrulline + phosphate + H(+). Its pathway is amino-acid biosynthesis; L-arginine biosynthesis; L-arginine from L-ornithine and carbamoyl phosphate: step 1/3. Functionally, reversibly catalyzes the transfer of the carbamoyl group from carbamoyl phosphate (CP) to the N(epsilon) atom of ornithine (ORN) to produce L-citrulline. This Pyrobaculum islandicum (strain DSM 4184 / JCM 9189 / GEO3) protein is Ornithine carbamoyltransferase.